We begin with the raw amino-acid sequence, 427 residues long: Trigger factor (427 aa).

Positions 163 to 248 (GDTAVIDFEG…VHEIKAKELP (86 aa)) constitute a PPIase FKBP-type domain.

The protein belongs to the FKBP-type PPIase family. Tig subfamily.

Its subcellular location is the cytoplasm. The catalysed reaction is [protein]-peptidylproline (omega=180) = [protein]-peptidylproline (omega=0). Involved in protein export. Acts as a chaperone by maintaining the newly synthesized protein in an open conformation. Functions as a peptidyl-prolyl cis-trans isomerase. The sequence is that of Trigger factor from Bacillus cytotoxicus (strain DSM 22905 / CIP 110041 / 391-98 / NVH 391-98).